The sequence spans 35 residues: Photosystem II reaction center protein T (35 aa).

A helical transmembrane segment spans residues Ser-3–Phe-23.

The protein belongs to the PsbT family. As to quaternary structure, PSII is composed of 1 copy each of membrane proteins PsbA, PsbB, PsbC, PsbD, PsbE, PsbF, PsbH, PsbI, PsbJ, PsbK, PsbL, PsbM, PsbT, PsbX, PsbY, PsbZ, Psb30/Ycf12, peripheral proteins PsbO, CyanoQ (PsbQ), PsbU, PsbV and a large number of cofactors. It forms dimeric complexes.

The protein resides in the cellular thylakoid membrane. Its function is as follows. Found at the monomer-monomer interface of the photosystem II (PS II) dimer, plays a role in assembly and dimerization of PSII. PSII is a light-driven water plastoquinone oxidoreductase, using light energy to abstract electrons from H(2)O, generating a proton gradient subsequently used for ATP formation. This Nostoc sp. (strain PCC 7120 / SAG 25.82 / UTEX 2576) protein is Photosystem II reaction center protein T.